We begin with the raw amino-acid sequence, 801 residues long: Protocadherin beta-8 (801 aa).

The first 29 residues, 1–29 (MEASGKLICRQRQVLFSFLLLGLSLAGAA), serve as a signal peptide directing secretion. Over 30-691 (EPRSYSVVEE…GQADSLTVYL (662 aa)) the chain is Extracellular. Cadherin domains lie at 36-134 (VVEE…SPVF), 139-243 (MLVK…APEF), 248-348 (YRVQ…APEV), 353-452 (FTSP…APAF), and 457-562 (YTLF…SPFV). A disulfide bond links Cys-97 and Cys-103. Residues Asn-419 and Asn-437 are each glycosylated (N-linked (GlcNAc...) asparagine). N-linked (GlcNAc...) asparagine glycosylation occurs at Asn-568. Residues 569–672 (SSAPCTELVP…LVDGFSQPYL (104 aa)) enclose the Cadherin 6 domain. A helical membrane pass occupies residues 692–710 (VVALASVSSLFLFSVLLFV). Residues 711–801 (AVRLCRRSRA…NGFGFSLQLK (91 aa)) lie on the Cytoplasmic side of the membrane.

As to quaternary structure, forms homodimers in trans (molecules expressed by two different cells). Forms promiscuous heterodimers in cis (at the plasma membrane of the same cell) with other protocadherins.

The protein resides in the cell membrane. Calcium-dependent cell-adhesion protein involved in cells self-recognition and non-self discrimination. Thereby, it is involved in the establishment and maintenance of specific neuronal connections in the brain. In Pan troglodytes (Chimpanzee), this protein is Protocadherin beta-8.